The following is a 325-amino-acid chain: MEIEAVEKEAIEKLSKISNVQELESFRIEFLGKKGKITGLMKNLKNLPPEERPAYGKRVNELREKIEKLFEEKRQQIQRILEQEKMEKMRIDVTVPGARRKLGHSHPVLKVMEEIERIFVSMGFDVVEGPEIETTWHNFDALNTPEWHPARDEHDSFYITDDLLLRTHTSPVQIRTMLERKPPIAIISPGKVYRRDYDATHLPMFHQVEGLHVDRDLSVAHLKFTLEEFARRMFGEGAKVRLRPSFFPFTEPSFEVDVYLSGYGWLEILGAGMVDPNVFLNVGYDPEEWTGYAFGMGVERIAMLKYGIADIREFVRNDVRFLSSY.

Glu-251 serves as a coordination point for Mg(2+).

Belongs to the class-II aminoacyl-tRNA synthetase family. Phe-tRNA synthetase alpha subunit type 1 subfamily. As to quaternary structure, tetramer of two alpha and two beta subunits. The cofactor is Mg(2+).

Its subcellular location is the cytoplasm. The enzyme catalyses tRNA(Phe) + L-phenylalanine + ATP = L-phenylalanyl-tRNA(Phe) + AMP + diphosphate + H(+). The protein is Phenylalanine--tRNA ligase alpha subunit (pheS) of Thermotoga maritima (strain ATCC 43589 / DSM 3109 / JCM 10099 / NBRC 100826 / MSB8).